Here is a 101-residue protein sequence, read N- to C-terminus: Cysteine-rich and transmembrane domain-containing protein B (101 aa).

Residues 1-80 are disordered; sequence MSQQPPAVGV…PQQQQQQKHS (80 aa). Residues 24 to 43 show a composition bias toward pro residues; it reads DAYPPPGQPYPQQGYPPPQG. Over residues 59–77 the composition is skewed to low complexity; that stretch reads YPEQGYPQQGYPPQQQQQQ. A helical membrane pass occupies residues 78-95; that stretch reads KHSPGMLEGCIAALCCYC.

The protein belongs to the CYSTM1 family.

The protein resides in the membrane. This chain is Cysteine-rich and transmembrane domain-containing protein B, found in Arabidopsis thaliana (Mouse-ear cress).